A 406-amino-acid polypeptide reads, in one-letter code: MSGCPFAGNSVGYTLKNVSMEDNEEDRAQTGVNRASKGGLIYGNYLQLEKILNAQELQSEVKGNKIHDEHLFIITHQAYELWFKQILWELDSVREIFQNGHVRDERNMLKVIARMHRVVVIFKLLVQQFSVLETMTALDFNDFREYLSPASGFQSLQFRLLENKIGVLQSLRVPYNRKHYRDNFGGDYNELLLKSEQEQTLLQLVEAWLERTPGLEPNGFNFWGKFEKNILKGLEEEFLRIQAKTDSEEKEEQMAEFRKQKEVLLCLFDEKRHDYLLSKGERRLSYRALQGALMIYFYREEPRFQVPFQLLTSLMDIDTLMTKWRYNHVCMVHRMLGTKAGTGGSSGYHYLRSTVSDRYKVFVDLFNLSTYLVPRHWVPKMNPIIHKFLYTAEYSDSSYFSSDESD.

Phosphoserine is present on S19. Substrate contacts are provided by residues 72–76 (FIITH) and R144. H328 lines the heme pocket. T342 contributes to the substrate binding site.

It belongs to the tryptophan 2,3-dioxygenase family. Homotetramer. Dimer of dimers. Heme is required as a cofactor.

It catalyses the reaction L-tryptophan + O2 = N-formyl-L-kynurenine. It participates in amino-acid degradation; L-tryptophan degradation via kynurenine pathway; L-kynurenine from L-tryptophan: step 1/2. Heme-dependent dioxygenase that catalyzes the oxidative cleavage of the L-tryptophan (L-Trp) pyrrole ring and converts L-tryptophan to N-formyl-L-kynurenine. Catalyzes the oxidative cleavage of the indole moiety. The sequence is that of Tryptophan 2,3-dioxygenase from Mus musculus (Mouse).